The chain runs to 165 residues: Pyruvoyl-dependent arginine decarboxylase 1 (165 aa).

A Pyruvic acid (Ser) modification is found at Ser45.

The protein belongs to the PdaD family. It depends on pyruvate as a cofactor.

The enzyme catalyses L-arginine + H(+) = agmatine + CO2. This chain is Pyruvoyl-dependent arginine decarboxylase 1 (pdaD1), found in Methanosarcina mazei (strain ATCC BAA-159 / DSM 3647 / Goe1 / Go1 / JCM 11833 / OCM 88) (Methanosarcina frisia).